We begin with the raw amino-acid sequence, 233 residues long: MTRIDSVRAATGSAKDSVLHAAEVVAPYADTAKERAAHYAHEARVRLAPKVTLAAEQARVQYGAHLAPRLEQARTHVPPKVELAAQEAALRTRKAARQAADYSRPMIEQAVAAAGPVRDEAATRAAAALVALRGQVTAEDIQKLVRKHERRARTGRAVRMLAVLGLVAGGAFAAWKWWDKQANPDWLVEPPEATEVPESGRLTSVDGSAEAVLDPEVQAKEAAEEAAKRDDQA.

A DNA-binding region (H-T-H motif) is located at residues 93-112; the sequence is RKAARQAADYSRPMIEQAVA. The interval 190–233 is disordered; the sequence is PPEATEVPESGRLTSVDGSAEAVLDPEVQAKEAAEEAAKRDDQA. Basic and acidic residues predominate over residues 217-233; that stretch reads VQAKEAAEEAAKRDDQA.

In terms of biological role, seems to be involved in the regulation of nhs expression. The sequence is that of Putative nosiheptide resistance regulatory protein from Streptomyces actuosus.